The sequence spans 540 residues: GMP synthase [glutamine-hydrolyzing] (540 aa).

In terms of domain architecture, Glutamine amidotransferase type-1 spans 26 to 216; it reads LIIILDFGSQ…VYHICDCEPT (191 aa). Cysteine 103 functions as the Nucleophile in the catalytic mechanism. Active-site residues include histidine 190 and glutamate 192. The GMPS ATP-PPase domain maps to 217 to 415; sequence WTTAAFVEEA…IGLPEEIVQR (199 aa). Residue 244–250 participates in ATP binding; that stretch reads SGGVDSS.

In terms of assembly, homodimer.

It catalyses the reaction XMP + L-glutamine + ATP + H2O = GMP + L-glutamate + AMP + diphosphate + 2 H(+). It participates in purine metabolism; GMP biosynthesis; GMP from XMP (L-Gln route): step 1/1. Its function is as follows. Catalyzes the synthesis of GMP from XMP. In Nostoc punctiforme (strain ATCC 29133 / PCC 73102), this protein is GMP synthase [glutamine-hydrolyzing].